A 209-amino-acid chain; its full sequence is Ubiquitin-conjugating enzyme E2 S (209 aa).

Residues 14-160 (QTIRQVMREL…ARMMTEIHAQ (147 aa)) form the UBC core domain. Cys98 (glycyl thioester intermediate) is an active-site residue. The tract at residues 164 to 209 (CAAGAAGDSKDDDGPSTKKHAGLDKKLQDKKKEKLLKEKKRMLKRL) is disordered. Positions 171-199 (DSKDDDGPSTKKHAGLDKKLQDKKKEKLL) are enriched in basic and acidic residues. Residues 200–209 (KEKKRMLKRL) show a composition bias toward basic residues.

It belongs to the ubiquitin-conjugating enzyme family.

It catalyses the reaction S-ubiquitinyl-[E1 ubiquitin-activating enzyme]-L-cysteine + [E2 ubiquitin-conjugating enzyme]-L-cysteine = [E1 ubiquitin-activating enzyme]-L-cysteine + S-ubiquitinyl-[E2 ubiquitin-conjugating enzyme]-L-cysteine.. Its pathway is protein modification; protein ubiquitination. Catalyzes the covalent attachment of ubiquitin to other proteins. Acts as an essential factor of the anaphase promoting complex/cyclosome (APC/C), a cell cycle-regulated ubiquitin ligase that controls progression through mitosis. Acts by specifically elongating polyubiquitin chains initiated by the E2 enzyme vih/UbcH10 on APC/C substrates, enhancing the degradation of APC/C substrates by the proteasome and promoting mitotic exit. In Drosophila ananassae (Fruit fly), this protein is Ubiquitin-conjugating enzyme E2 S.